Here is a 273-residue protein sequence, read N- to C-terminus: MRDKLFYFLSKYNFSPRDKIGQNFLIMRDVIIKAVETSEIKKSDVVLEVGPGFGFLTDELSKRAGKVYAIELDKRIIEILENEYNWENVEIIQGDAVKIEWPEFNKVVSNIPYQISSPFTFKLLKHDFEKAVVMYQLEFAKRMVAKPGDRNYSRLSLMVNALANAKIVMKIGRGAFYPKPKVDSALVLIVPKPKDERIELNENLVKALFQHRRKLVSKALKESCHMLGINKKELKTLKNILENVPHAKKRVFELTPEEVKEIEEFLKIQGIIN.

Positions 23, 25, 50, 71, 95, and 110 each coordinate S-adenosyl-L-methionine.

This sequence belongs to the class I-like SAM-binding methyltransferase superfamily. rRNA adenine N(6)-methyltransferase family. RsmA subfamily.

The protein resides in the cytoplasm. Its function is as follows. Specifically dimethylates two adjacent adenosines in the loop of a conserved hairpin near the 3'-end of 16S rRNA in the 30S particle. May play a critical role in biogenesis of 30S subunits. This Pyrococcus furiosus (strain ATCC 43587 / DSM 3638 / JCM 8422 / Vc1) protein is Probable ribosomal RNA small subunit methyltransferase A.